Here is a 465-residue protein sequence, read N- to C-terminus: Plasma alpha-L-fucosidase (465 aa).

An N-terminal signal peptide occupies residues Met-1 to Ala-26. N-linked (GlcNAc...) asparagine glycosylation is found at Asn-169 and Asn-237. At Ser-299 the chain carries Phosphoserine. Asn-375 is a glycosylation site (N-linked (GlcNAc...) asparagine).

It belongs to the glycosyl hydrolase 29 family. As to quaternary structure, homotetramer.

The protein resides in the secreted. The catalysed reaction is an alpha-L-fucoside + H2O = L-fucose + an alcohol. Its function is as follows. Alpha-L-fucosidase is responsible for hydrolyzing the alpha-1,6-linked fucose joined to the reducing-end N-acetylglucosamine of the carbohydrate moieties of glycoproteins. This chain is Plasma alpha-L-fucosidase (FUCA2), found in Pongo abelii (Sumatran orangutan).